The primary structure comprises 106 residues: Large ribosomal subunit protein uL24 (106 aa).

The protein belongs to the universal ribosomal protein uL24 family. In terms of assembly, part of the 50S ribosomal subunit.

Its function is as follows. One of two assembly initiator proteins, it binds directly to the 5'-end of the 23S rRNA, where it nucleates assembly of the 50S subunit. One of the proteins that surrounds the polypeptide exit tunnel on the outside of the subunit. The protein is Large ribosomal subunit protein uL24 of Clostridium tetani (strain Massachusetts / E88).